The following is a 95-amino-acid chain: Osteocalcin-related protein (95 aa).

The signal sequence occupies residues 1–23 (MRTLSLLTLLALAALCLSDLTDA). The propeptide occupies 24–49 (TPTGPESDKAFMSKQEGNKVVNRLRR). The region spanning 46-92 (RLRRYLGASVPSPDPLEPTRELCELDPACDELSNQYGLKTAYRRIYG) is the Gla domain. Ca(2+) contacts are provided by glutamate 62, glutamate 66, glutamate 69, and aspartate 75. Glutamate 66 and glutamate 69 each carry 4-carboxyglutamate. An intrachain disulfide couples cysteine 68 to cysteine 74.

The protein belongs to the osteocalcin/matrix Gla protein family. In terms of processing, gamma-carboxyglutamic acid residues are formed by vitamin K dependent carboxylation. These residues are essential for the binding of calcium. In terms of tissue distribution, expressed in kidney and lung, but not in bone.

It is found in the secreted. Functionally, binds strongly to apatite and calcium. This Mus musculus (Mouse) protein is Osteocalcin-related protein.